The primary structure comprises 577 residues: Outer spore wall assembly protein SHE10 (577 aa).

A signal peptide spans 1–23; that stretch reads MGKLIKLITTLTVLVSLLQYCCE. Coiled-coil stretches lie at residues 379–416 and 513–561; these read NETR…ENVE and ILRS…EEDV. The segment covering 525-545 has biased composition (basic and acidic residues); the sequence is RERKERERKEREKAAAEEFQR. Residues 525–577 are disordered; it reads RERKERERKEREKAAAEEFQRQQELLLQQEEEDEEDVSYTSTSTITTTTTMTL. Positions 562 to 577 are enriched in low complexity; the sequence is SYTSTSTITTTTTMTL.

The protein belongs to the SHE10 family. In terms of assembly, component of the mitochondria-localized RNase mitochondrial RNA-processing (RNase MRP) composed of one single RNA encoded by the NME1 gene and at least 31 proteins. Absent in the nucleus-localized RNase MRP (NuMRP).

Its subcellular location is the mitochondrion. Functionally, involved in spore wall assembly. May be a component of the mitochondrial RNase MRP (MtMRP), a ribonucleoprotein endoribonuclease involved in the cleaving RNA transcripts to generate primers for DNA replication in mitochondria. In Saccharomyces cerevisiae (strain RM11-1a) (Baker's yeast), this protein is Outer spore wall assembly protein SHE10.